Reading from the N-terminus, the 327-residue chain is tRNA U34 carboxymethyltransferase (327 aa).

Residues Lys91, Trp105, Lys110, Gly130, 181-182 (IE), Met196, Tyr200, and Arg315 each bind carboxy-S-adenosyl-L-methionine.

Belongs to the class I-like SAM-binding methyltransferase superfamily. CmoB family. In terms of assembly, homotetramer.

It carries out the reaction carboxy-S-adenosyl-L-methionine + 5-hydroxyuridine(34) in tRNA = 5-carboxymethoxyuridine(34) in tRNA + S-adenosyl-L-homocysteine + H(+). Catalyzes carboxymethyl transfer from carboxy-S-adenosyl-L-methionine (Cx-SAM) to 5-hydroxyuridine (ho5U) to form 5-carboxymethoxyuridine (cmo5U) at position 34 in tRNAs. The polypeptide is tRNA U34 carboxymethyltransferase (Pectobacterium atrosepticum (strain SCRI 1043 / ATCC BAA-672) (Erwinia carotovora subsp. atroseptica)).